The chain runs to 72 residues: Guanine nucleotide-binding protein G(I)/G(S)/G(O) subunit gamma-12 (72 aa).

An N-acetylserine modification is found at Ser-2. Residues Ser-10 and Ser-26 each carry the phosphoserine modification. At Tyr-42 the chain carries Phosphotyrosine. Position 49 is a phosphoserine (Ser-49). A Cysteine methyl ester modification is found at Cys-69. Cys-69 is lipidated: S-geranylgeranyl cysteine. Residues 70–72 (IIL) constitute a propeptide, removed in mature form.

It belongs to the G protein gamma family. G proteins are composed of 3 units, alpha, beta and gamma.

Its subcellular location is the cell membrane. Guanine nucleotide-binding proteins (G proteins) are involved as a modulator or transducer in various transmembrane signaling systems. The beta and gamma chains are required for the GTPase activity, for replacement of GDP by GTP, and for G protein-effector interaction. The protein is Guanine nucleotide-binding protein G(I)/G(S)/G(O) subunit gamma-12 (Gng12) of Mus musculus (Mouse).